The following is a 312-amino-acid chain: Putative pyridoxal kinase BUD16 (312 aa).

Positions 9, 44, and 122 each coordinate substrate. Residues 183–184 (TS) and 211–223 (RVPF…TGVG) each bind ATP. Asp-224 contacts substrate.

The protein belongs to the pyridoxine kinase family. A divalent metal cation is required as a cofactor.

The protein resides in the cytoplasm. It is found in the nucleus. It carries out the reaction pyridoxal + ATP = pyridoxal 5'-phosphate + ADP + H(+). Required for synthesis of pyridoxal-5-phosphate from vitamin B6. Important for bud site selection. The sequence is that of Putative pyridoxal kinase BUD16 (BUD16) from Saccharomyces cerevisiae (strain ATCC 204508 / S288c) (Baker's yeast).